A 956-amino-acid chain; its full sequence is Probable hypoxanthine oxidase XdhD (956 aa).

Mo-molybdopterin contacts are provided by Q414, F445, and A727.

This sequence belongs to the xanthine dehydrogenase family. [2Fe-2S] cluster serves as cofactor. Mo-molybdopterin is required as a cofactor.

In terms of biological role, probably has no xanthine dehydrogenase activity; however deletion results in increased adenine sensitivity, suggesting that this protein contributes to the conversion of adenine to guanine nucleotides during purine salvage. This is Probable hypoxanthine oxidase XdhD (xdhD) from Escherichia coli O157:H7.